Reading from the N-terminus, the 410-residue chain is Chorismate synthase (410 aa).

Positions 40 and 46 each coordinate NADP(+). FMN-binding positions include 129–131 (RSS), 257–258 (QA), Gly-302, 317–321 (KPISS), and Arg-343.

Belongs to the chorismate synthase family. As to quaternary structure, homotetramer. FMNH2 is required as a cofactor.

It catalyses the reaction 5-O-(1-carboxyvinyl)-3-phosphoshikimate = chorismate + phosphate. Its pathway is metabolic intermediate biosynthesis; chorismate biosynthesis; chorismate from D-erythrose 4-phosphate and phosphoenolpyruvate: step 7/7. In terms of biological role, catalyzes the anti-1,4-elimination of the C-3 phosphate and the C-6 proR hydrogen from 5-enolpyruvylshikimate-3-phosphate (EPSP) to yield chorismate, which is the branch point compound that serves as the starting substrate for the three terminal pathways of aromatic amino acid biosynthesis. This reaction introduces a second double bond into the aromatic ring system. The polypeptide is Chorismate synthase (Chlorobaculum parvum (strain DSM 263 / NCIMB 8327) (Chlorobium vibrioforme subsp. thiosulfatophilum)).